Here is a 456-residue protein sequence, read N- to C-terminus: uncharacterized protein (456 aa).

The TRAM domain maps to L3–E61. [4Fe-4S] cluster contacts are provided by C74, C80, C83, and C163. 4 residues coordinate S-adenosyl-L-methionine: Q289, Y318, E339, and D384. Residue C411 is the Nucleophile of the active site.

This sequence belongs to the class I-like SAM-binding methyltransferase superfamily. RNA M5U methyltransferase family.

This is an uncharacterized protein from Clostridium acetobutylicum (strain ATCC 824 / DSM 792 / JCM 1419 / IAM 19013 / LMG 5710 / NBRC 13948 / NRRL B-527 / VKM B-1787 / 2291 / W).